The primary structure comprises 110 residues: MKFCPKCGNLMLPDRKRKVWVCRSCGYEEPFDEEKDREKTVIKQEVKHKPDEGIVVIEQDLKTLPTTKITCPKCGNDTAYWWEMQTRAGDEPSTIFYKCTKCGHTWRSYE.

The Zn(2+) site is built by cysteine 4, cysteine 7, cysteine 22, cysteine 25, cysteine 71, cysteine 74, cysteine 99, and cysteine 102. The C4-type zinc finger occupies 4–25 (CPKCGNLMLPDRKRKVWVCRSC). The segment at 67–107 (TKITCPKCGNDTAYWWEMQTRAGDEPSTIFYKCTKCGHTWR) adopts a TFIIS-type zinc-finger fold.

This sequence belongs to the archaeal RpoM/eukaryotic RPA12/RPB9/RPC11 RNA polymerase family.

Its function is as follows. Induces RNA cleavage activity in the RNA polymerase. In its presence, the cleavage activity of the RNA polymerase truncates the RNA back to position +15 in a stepwise manner by releasing mainly dinucleotides from the 3'-end of the nascent RNA. The truncated RNAs are able to continue elongation. Involved in transcriptional proofreading and fidelity. Misincorporation of nucleotides during elongation of transcription leads to arrested elongation complexes which are rescued by TFS-promoted removal of a dinucleotide from the 3'-end. TFS is able to induce a cleavage resynthesis cycle in stalled elongation complexes (resulting from the next missing nucleotide or a reduced incorporation rate of a wrong nucleotide) preventing misincorporation and enabling proofreading in a post-incorporation manner. Pausing of elongation complexes is the main determinant of TFS-induced RNA cleavage. The polypeptide is Transcription factor S (Thermococcus celer).